Here is a 426-residue protein sequence, read N- to C-terminus: ATP-dependent Clp protease ATP-binding subunit ClpX (426 aa).

In terms of domain architecture, ClpX-type ZB spans 1–52 (MNEIKKRCSFCNKEESLDNPIINSGITPDVYICNYCLIVGSEILTGYLNKNP). The Zn(2+) site is built by Cys-8, Cys-11, Cys-33, and Cys-36. 129–136 (PTGSGKTL) contacts ATP.

The protein belongs to the ClpX chaperone family. Component of the ClpX-ClpP complex. Forms a hexameric ring that, in the presence of ATP, binds to fourteen ClpP subunits assembled into a disk-like structure with a central cavity, resembling the structure of eukaryotic proteasomes.

In terms of biological role, ATP-dependent specificity component of the Clp protease. It directs the protease to specific substrates. Can perform chaperone functions in the absence of ClpP. This Helicobacter hepaticus (strain ATCC 51449 / 3B1) protein is ATP-dependent Clp protease ATP-binding subunit ClpX.